The sequence spans 81 residues: Toxin TdNa10 (81 aa).

An N-terminal signal peptide occupies residues 1 to 20 (MWTFAIVLAFLLIGLDEGEA). Positions 21–81 (LDGYPLSKNN…KMYPGELPCH (61 aa)) constitute an LCN-type CS-alpha/beta domain. 4 cysteine pairs are disulfide-bonded: cysteine 32/cysteine 80, cysteine 36/cysteine 57, cysteine 42/cysteine 62, and cysteine 46/cysteine 64.

Belongs to the long (4 C-C) scorpion toxin superfamily. Sodium channel inhibitor family. Beta subfamily. In terms of tissue distribution, expressed by the venom gland.

The protein localises to the secreted. Alpha toxins bind voltage-independently at site-3 of sodium channels (Nav) and inhibit the inactivation of the activated channels, thereby blocking neuronal transmission. This toxin binds, in vitro, to sodium channels and inhibits the inactivation of the activated channels. Seems not toxic to mice, crickets and sweet-water shrimps. This Tityus discrepans (Venezuelan scorpion) protein is Toxin TdNa10.